Reading from the N-terminus, the 1184-residue chain is PR domain zinc finger protein 10 (1184 aa).

The interval 122–162 (LDAKEEEEEEEDEDEDTEEEEEEDAEDTDVDDWQPDPPRPF) is disordered. Over residues 125–155 (KEEEEEEEDEDEDTEEEEEEDAEDTDVDDWQ) the composition is skewed to acidic residues. Positions 202–320 (LPLVLYIDRF…PKQELKVWYA (119 aa)) constitute an SET domain. Positions 221–325 (IPKRTQFGPV…KVWYAASYAE (105 aa)) are N-terminal PR domain; essential for transcriptional activator activity. The C2H2-type 1 zinc finger occupies 349-371 (WPCYECNRRFISSEQLQQHLNSH). Lysine 374 participates in a covalent cross-link: Glycyl lysine isopeptide (Lys-Gly) (interchain with G-Cter in SUMO2). Over residues 381–401 (TRGRGRGRGKRRFGPGRRPGR) the composition is skewed to basic residues. The disordered stretch occupies residues 381–405 (TRGRGRGRGKRRFGPGRRPGRPPKF). Serine 418 is subject to Phosphoserine. Position 422 is a phosphothreonine (threonine 422). Residues 444 to 487 (GLDQPEQASIPIPQLPQETPPSLEQEPETHTLHLQPQQEESLVP) form a disordered region. Residues 475–487 (LHLQPQQEESLVP) are compositionally biased toward polar residues. 8 consecutive C2H2-type zinc fingers follow at residues 520–542 (FKCL…LRFH), 550–572 (LTCD…MKLH), 578–600 (YSCI…VAIH), 606–629 (FTCP…RSFH), 634–656 (YQCT…MLRH), 662–685 (FLCS…QRMH), 717–740 (FKCR…SKRH), and 850–873 (VCCP…RKKH). Residues 917-1164 (QAMTELSQTL…TGPSQQQTTQ (248 aa)) form a C-terminal glutamine-rich region; essential for transcriptional activator activity region. The disordered stretch occupies residues 1004-1054 (EPAPAAPSASQVAGQPLSPSAQQVQQGLSPSHIQGSSSTQGQALQQQQNSS). Residues 1014–1036 (QVAGQPLSPSAQQVQQGLSPSHI) show a composition bias toward polar residues. A compositionally biased stretch (low complexity) spans 1037–1054 (QGSSSTQGQALQQQQNSS).

This sequence belongs to the class V-like SAM-binding methyltransferase superfamily. As to expression, present in brain, liver, kidney, spleen and thymus (at protein level).

The protein resides in the nucleus. Transcriptional activator, essential for early embryonic development and survival of embryonic stem cells (ESCs). Supports cell growth and survival during early development by transcriptionally activating the expression of the translation initiation factor EIF3B, to sustain global translation. Activates the transcription of FLNC. The polypeptide is PR domain zinc finger protein 10 (Prdm10) (Mus musculus (Mouse)).